Reading from the N-terminus, the 265-residue chain is Mlc titration factor A (265 aa).

H111, H148, H152, and E211 together coordinate Zn(2+).

Belongs to the MtfA family. Interacts with Mlc. It depends on Zn(2+) as a cofactor.

Its subcellular location is the cytoplasm. Functionally, involved in the modulation of the activity of the glucose-phosphotransferase system (glucose-PTS). Interacts with the transcriptional repressor Mlc, preventing its interaction with DNA and leading to the modulation of expression of genes regulated by Mlc, including ptsG, which encodes the PTS system glucose-specific EIICB component. In terms of biological role, shows zinc-dependent metallopeptidase activity. The chain is Mlc titration factor A from Escherichia coli O7:K1 (strain IAI39 / ExPEC).